The following is a 507-amino-acid chain: RNA-binding protein MEX3B (507 aa).

Residues 1–22 (MPSSLFADMERNGSGGGGGETL) are disordered. KH domains follow at residues 59 to 120 (MTEC…RREI) and 155 to 216 (QTTI…REEI). Disordered regions lie at residues 256 to 279 (NQSS…LGSA) and 426 to 450 (SSSS…GMRR). Residues 426–446 (SSSSSSSSSSSSSSSSSSSSS) show a composition bias toward low complexity. An RING-type zinc finger spans residues 456–496 (CSICFESEVIAALVPCGHNLFCMECANRICEKNQPQCPVCH).

The protein localises to the cytoplasm. It is found in the nucleus. The protein resides in the cytoplasmic granule. Its subcellular location is the P-body. Functionally, RNA-binding protein. May be involved in post-transcriptional regulatory mechanisms. This is RNA-binding protein MEX3B (mex3b) from Xenopus laevis (African clawed frog).